A 1819-amino-acid chain; its full sequence is Gamma-tubulin complex component 6 (1819 aa).

Disordered regions lie at residues 810–889 (SEAH…GARP), 929–951 (LPPSAPGEAPAAASTQPSRPQEY), and 1000–1023 (RETLLPSHPPRRAALEEGSSQPTE). 9 consecutive repeat copies span residues 1027–1053 (GQVSGGGLPTGDYASEIAPTRPRWNTH), 1054–1080 (GHVSDASIRVGENVSDVAPTQPRWNTH), 1081–1107 (GHVSNASISLGESVSDVAPTRPRWNIH), 1108–1134 (GHVSNASIRVGENVSDVAPTRPRWNTH), 1135–1161 (GHVSNASIRVGENVSDVAPTRPRWNTH), 1162–1188 (GHVSDASISLGESVSDMAPARPRWNTH), 1189–1215 (GHVSDASISLGESVSDMAPTRPRWNTH), 1216–1242 (GHVSDTSIRVGENVSDVAPIRSRCNTH), and 1243–1269 (GHVSDASISLGEPVSDVVSTRPRWNTH). Residues 1027–1269 (GQVSGGGLPT…VSTRPRWNTH (243 aa)) are 9 X 27 AA tandem repeats. The interval 1271-1412 (PIPPPHMVLG…EAEASAAEAQ (142 aa)) is disordered. The span at 1297 to 1314 (PPGHTSQSALSLGAQSTV) shows a compositional bias: polar residues. Residues 1321 to 1335 (LPVEVGPSLSSPSSG) show a composition bias toward low complexity. The span at 1384-1398 (WPLNSQEDTAAQSSP) shows a compositional bias: polar residues.

Belongs to the TUBGCP family. Component of the gamma-tubulin ring complex (gTuRC) consisting of TUBGCP2, TUBGCP3, TUBGCP4, TUBGCP5 and TUBGCP6 and gamma-tubulin TUBG1 or TUBG2. TUBGCP2, TUBGCP3, TUBGCP4, TUBGCP5 and TUBGCP6 assemble in a 5:5:2:1:1 stoichiometry; each is associated with a gamma-tubulin, thereby arranging 14 gamma-tubulins in a helical manner. Gamma-tubulin at the first position is blocked by TUBGCP3 at the last position, allowing 13 protafilaments to grow into a microtubule. The gTuRC (via TUBGCP3 and TUBGCP6) interacts with ACTB and MZT1; the interactions form a luminal bridge that stabilizes the initial structure during complex assembly. The gTuRC (via TUBGCP2) interacts with MZT2A/MZT2B and CDK5RAP2 (via CM1 motif); the interactions play a role in gTuRC activation.

Its subcellular location is the cytoplasm. It is found in the cytoskeleton. The protein localises to the microtubule organizing center. The protein resides in the centrosome. In terms of biological role, component of the gamma-tubulin ring complex (gTuRC) which mediates microtubule nucleation. The gTuRC regulates the minus-end nucleation of alpha-beta tubulin heterodimers that grow into microtubule protafilaments, a critical step in centrosome duplication and spindle formation. The polypeptide is Gamma-tubulin complex component 6 (TUBGCP6) (Homo sapiens (Human)).